Here is a 495-residue protein sequence, read N- to C-terminus: MRSAFILALGLITASADALVTRGAIEACLSAAGVPIDIPGTADYERDVEPFNIRLPYIPTAIAQTQTTAHIQSAVQCAKKLNLKVSAKSGGHSYASFGFGGENGHLMVQLDRMIDVISYNDKTGIAHVEPGARLGHLATVLNDKYGRAISHGTCPGVGISGHFAHGGFGFSSHMHGLAVDSVVGVTVVLADGRIVEASATENADLFWGIKGAGSNFGIVAVWKLATFPAPKVLTRFGVTLNWKNKTSALKGIEAVEDYARWVAPREVNFRIGDYGAGNPGIEGLYYGTPEQWRAAFQPLLDTLPAGYVVNPTTSLNWIESVLSYSNFDHVDFITPQPVENFYAKSLTLKSIKGDAVKNFVDYYFDVSNKVKDRFWFYQLDVHGGKNSQVTKVTNAETAYPHRDKLWLIQFYDRYDNNQTYPETSFKFLDGWVNSVTKALPKSDWGMYINYADPRMDRDYATKVYYGENLARLQKLKAKFDPTDRFYYPQAVRPVK.

Positions 1–22 are cleaved as a signal peptide; the sequence is MRSAFILALGLITASADALVTR. One can recognise an FAD-binding PCMH-type domain in the interval 55-229; that stretch reads LPYIPTAIAQ…AVWKLATFPA (175 aa). Residues 92-154 constitute a cross-link (6-(S-cysteinyl)-8alpha-(pros-histidyl)-FAD (His-Cys)); it reads HSYASFGFGG…YGRAISHGTC (63 aa). N-linked (GlcNAc...) asparagine glycans are attached at residues asparagine 244 and asparagine 417.

It belongs to the oxygen-dependent FAD-linked oxidoreductase family. Requires FAD as cofactor. Post-translationally, the FAD cofactor is bound via a bicovalent 6-S-cysteinyl, 8alpha-N1-histidyl FAD linkage.

It localises to the secreted. It carries out the reaction beta-D-glucose + O2 = D-glucono-1,5-lactone + H2O2. The catalysed reaction is D-galactose + O2 = D-galactono-1,5-lactone + H2O2. The enzyme catalyses D-cellobiose + O2 = D-cellobiono-1,5-lactone + H2O2. It catalyses the reaction beta-lactose + O2 = lactobiono-1,5-lactone + H2O2. It carries out the reaction D-maltose + O2 = D-maltobiono-1,5-lactone + H2O2. The catalysed reaction is D-xylose + O2 = D-xylono-1,5-lactone + H2O2. Catalyzes the selective oxidation of C1 hydroxyl moieties on mono-, oligo- and polysaccharides with concomitant reduction of molecular oxygen to hydrogen peroxide. This results in the formation of the corresponding lactones, which typically undergo spontaneous hydrolysis. Carbohydrate oxidase is able to oxidize a variety of substrates including D-glucose, D-galactose, D-xylose, D-maltose, D-cellobiose, and lactose. In addition, among various oligosaccharides, the enzyme preferred tetrameric dextrins, indicating a favorable interaction of four linked glucose units with the substrate binding pocket. The sequence is that of Carbohydrate oxidase from Microdochium nivale (Pink snow mold).